The following is a 371-amino-acid chain: Ferrochelatase (371 aa).

Residues histidine 218 and glutamate 299 each coordinate Fe cation.

Belongs to the ferrochelatase family.

Its subcellular location is the cytoplasm. The catalysed reaction is heme b + 2 H(+) = protoporphyrin IX + Fe(2+). It functions in the pathway porphyrin-containing compound metabolism; protoheme biosynthesis; protoheme from protoporphyrin-IX: step 1/1. Catalyzes the ferrous insertion into protoporphyrin IX. In Cupriavidus pinatubonensis (strain JMP 134 / LMG 1197) (Cupriavidus necator (strain JMP 134)), this protein is Ferrochelatase.